A 336-amino-acid polypeptide reads, in one-letter code: uncharacterized protein (336 aa).

It to bacterial alkanal monooxygenase alpha and beta chains.

This is an uncharacterized protein from Bacillus subtilis (strain 168).